We begin with the raw amino-acid sequence, 207 residues long: Large ribosomal subunit protein uL4 (207 aa).

Residues 44 to 78 are disordered; it reads QRQGTHDVKNRSEVRGGGRKPWRQKGTGRARQGSI. Residues 47–59 show a composition bias toward basic and acidic residues; that stretch reads GTHDVKNRSEVRG. Residues 60–71 show a composition bias toward basic residues; sequence GGRKPWRQKGTG.

The protein belongs to the universal ribosomal protein uL4 family. As to quaternary structure, part of the 50S ribosomal subunit.

Functionally, one of the primary rRNA binding proteins, this protein initially binds near the 5'-end of the 23S rRNA. It is important during the early stages of 50S assembly. It makes multiple contacts with different domains of the 23S rRNA in the assembled 50S subunit and ribosome. In terms of biological role, forms part of the polypeptide exit tunnel. The protein is Large ribosomal subunit protein uL4 of Brevibacillus brevis (strain 47 / JCM 6285 / NBRC 100599).